The following is a 174-amino-acid chain: Late lactation protein B (174 aa).

Residues M1–A18 form the signal peptide. C77 and C169 are disulfide-bonded.

This sequence belongs to the calycin superfamily. Lipocalin family. As to expression, mammary gland specific. Secreted in milk.

It is found in the secreted. In terms of biological role, probably serves a role in the transport of a small ligand released during the hydrolysis of milk fat. In Notamacropus eugenii (Tammar wallaby), this protein is Late lactation protein B (LLPB).